A 510-amino-acid chain; its full sequence is GMP synthase [glutamine-hydrolyzing] (510 aa).

Positions 5–195 (LVLVVDFGGQ…LFNVCNLKGD (191 aa)) constitute a Glutamine amidotransferase type-1 domain. The active-site Nucleophile is the C82. Residues H169 and E171 contribute to the active site. The 190-residue stretch at 196–385 (WSMSSFAEQQ…LGIPHKLVWR (190 aa)) folds into the GMPS ATP-PPase domain. 223–229 (SGGVDSS) serves as a coordination point for ATP.

As to quaternary structure, homodimer.

It carries out the reaction XMP + L-glutamine + ATP + H2O = GMP + L-glutamate + AMP + diphosphate + 2 H(+). Its pathway is purine metabolism; GMP biosynthesis; GMP from XMP (L-Gln route): step 1/1. Functionally, catalyzes the synthesis of GMP from XMP. In Clostridium botulinum (strain Okra / Type B1), this protein is GMP synthase [glutamine-hydrolyzing].